A 492-amino-acid polypeptide reads, in one-letter code: Catalase isozyme 1 (492 aa).

Residues histidine 65 and asparagine 138 contribute to the active site. Tyrosine 348 contributes to the heme binding site.

The protein belongs to the catalase family. Homotetramer. Heme is required as a cofactor.

The protein localises to the peroxisome. The protein resides in the glyoxysome. The enzyme catalyses 2 H2O2 = O2 + 2 H2O. Functionally, occurs in almost all aerobically respiring organisms and serves to protect cells from the toxic effects of hydrogen peroxide. The sequence is that of Catalase isozyme 1 (CAT1) from Solanum tuberosum (Potato).